The following is a 328-amino-acid chain: uncharacterized protein (328 aa).

To the C-terminal of para-aminobenzoate synthase component I.

This is an uncharacterized protein from Haemophilus influenzae (strain ATCC 51907 / DSM 11121 / KW20 / Rd).